Here is a 417-residue protein sequence, read N- to C-terminus: Acetyltransferase nanB (417 aa).

The N-terminal stretch at 1–24 (MRPSTTTLSLLVFLISSILLATTG) is a signal peptide. The next 5 membrane-spanning stretches (helical) occupy residues 150 to 170 (LAVS…LKNI), 284 to 304 (YLNN…FNWI), 307 to 327 (VQDG…GYFL), 356 to 376 (VGAL…VYPF), and 389 to 409 (FVDV…AAAL).

This sequence belongs to the wax synthase family.

It localises to the membrane. It functions in the pathway secondary metabolite biosynthesis. Its function is as follows. Acetyltransferase; part of the gene cluster that mediates the biosynthesis of the benzazepine alkaloid nanangelenin A which contains an unprecedented 3,4-dihydro-1-benzazepine-2,5-dione-N-prenyl-N-acetoxy-anthranilamide scaffold. The first step of nanangelenin biosynthesis is catalyzed by the indoleamine 2,3-dioxygenase nanC which produces N-formyl-kynurenine through the catabolism of tryptophan. The two-module NRPS nanA then utilizes anthranilate (Ant) and L-kynurenine (L-Kyn) to assemble the dipeptide product nanangelenin B. The first adenylation domain of nanA (A1) loads anthranilate onto the T1 domain, while A2 loads kynurenine, generated through spontaneous nonenzymatic deformylation of the nanC-supplied N-formyl-kynurenine. The peptide bond formation between the tethered amino acids is catalyzed by the first condensation domain (C1) between anthranilate's carbonyl carbon and kynurenine's aliphatic primary amine. The second C domain (C2) catalyzes the final cyclization event between the aromatic amine of kynurenine and the tethered carbonyl carbon, yielding nanangelenin B. The terminal T3 domain enhances the catalytic efficiency of C2, suggesting the T2-tethered Ant-L-Kyn is transferred to T3 prior to cyclization by C2. Once released from nanA, nanangelenin B is then prenylated by the prenyltransferase nanD to form nanangelenin C. Nanangelenin C is then N-hydroxylated by the FAD-dependent monooxygenase nanF and further acetylated by the acetyltransferase nanB to yield nanangelenin F. Finally, the N-methyltransferase nanE methylates the amide nitrogen of 1-benzazepine to convert nanangelenin F into nanangelenin A. NanE is also able to methylate most of the intermediates of the pathway such as nanangelenin B and nanangelenin C to produce nanangelenin D and nanangelenin E, respectively. This is Acetyltransferase nanB from Aspergillus nanangensis.